Consider the following 287-residue polypeptide: Shikimate dehydrogenase (NADP(+)) (287 aa).

Residues 20 to 22 (SRS) and Thr67 contribute to the shikimate site. Lys71 functions as the Proton acceptor in the catalytic mechanism. Glu84 contacts NADP(+). Positions 93 and 108 each coordinate shikimate. Residues 132 to 136 (GAGGA), 156 to 161 (NRTAAR), and Met226 each bind NADP(+). Residue Tyr228 coordinates shikimate. Gly250 contacts NADP(+).

The protein belongs to the shikimate dehydrogenase family. In terms of assembly, homodimer.

The enzyme catalyses shikimate + NADP(+) = 3-dehydroshikimate + NADPH + H(+). The protein operates within metabolic intermediate biosynthesis; chorismate biosynthesis; chorismate from D-erythrose 4-phosphate and phosphoenolpyruvate: step 4/7. Its function is as follows. Involved in the biosynthesis of the chorismate, which leads to the biosynthesis of aromatic amino acids. Catalyzes the reversible NADPH linked reduction of 3-dehydroshikimate (DHSA) to yield shikimate (SA). The protein is Shikimate dehydrogenase (NADP(+)) of Bordetella pertussis (strain Tohama I / ATCC BAA-589 / NCTC 13251).